Consider the following 754-residue polypeptide: ATP-dependent RNA helicase DRS1 (754 aa).

2 disordered regions span residues 1–61 and 119–227; these read MVVG…NLDE and GLVK…GDEA. Residues 19 to 34 show a composition bias toward acidic residues; the sequence is DSEDDVPILDSSDDEK. The span at 40-51 shows a compositional bias: basic residues; the sequence is TTKKRKGKNNKK. Positions 124-142 are enriched in basic and acidic residues; that stretch reads AHIDSKQEEETEKEKVEKE. Composition is skewed to acidic residues over residues 167-193 and 202-211; these read NQSE…QEEM and DEIDEEDDSE. S210 bears the Phosphoserine mark. The short motif at 233–261 is the Q motif element; sequence ENFNSLSLSRPVLKGLASLGYVKPSPIQS. The Helicase ATP-binding domain occupies 264–439; the sequence is IPIALLGKDI…SLSLKKPVRI (176 aa). 277-284 contributes to the ATP binding site; the sequence is AVTGSGKT. The DEAD box motif lies at 387–390; the sequence is DEAD. One can recognise a Helicase C-terminal domain in the interval 450 to 641; that stretch reads KLTQEFVRIR…SMNDTIEDIL (192 aa). Residues 623-669 adopt a coiled-coil conformation; that stretch reads IEETNKLVESMNDTIEDILVEEKEEKEILRAEMQLRKGENMLKHKKE. Residues 675–754 form a disordered region; that stretch reads RRTWFQSESD…NKKKGFKSRR (80 aa). Positions 696–707 are enriched in basic residues; the sequence is RNKKVTNSKKRK. Basic and acidic residues predominate over residues 724–736; that stretch reads TKTDRIADQERTF. The span at 737–754 shows a compositional bias: basic residues; sequence KKQKSTNSNKKKGFKSRR.

The protein belongs to the DEAD box helicase family. DDX27/DRS1 subfamily. Interacts with RRP1 and associates with pre-ribosomal particles.

It localises to the nucleus. The protein resides in the nucleolus. The enzyme catalyses ATP + H2O = ADP + phosphate + H(+). In terms of biological role, ATP-binding RNA helicase involved in ribosome assembly. This is ATP-dependent RNA helicase DRS1 (DRS1) from Saccharomyces cerevisiae (strain YJM789) (Baker's yeast).